The primary structure comprises 270 residues: High choriolytic enzyme 1 (270 aa).

Positions Met-1 to Ala-20 are cleaved as a signal peptide. The propeptide at Leu-21–Arg-70 is activation peptide. Asn-53 is a glycosylation site (N-linked (GlcNAc...) asparagine). The Peptidase M12A domain maps to Asn-71–Arg-270. Intrachain disulfides connect Cys-75–Cys-80, Cys-120–Cys-269, and Cys-141–Cys-161. Position 169 (His-169) interacts with Zn(2+). Glu-170 is an active-site residue. The Zn(2+) site is built by His-173 and His-179.

The cofactor is Zn(2+).

Its subcellular location is the zymogen granule. The enzyme catalyses Hydrolysis of the inner layer of fish egg envelope. Also hydrolysis of casein and small molecule substrates such as succinyl-Leu-Leu-Val-Tyr-|-7-(4-methyl)coumarylamide.. In terms of biological role, participates in the breakdown of the egg envelope, which is derived from the egg extracellular matrix, at the time of hatching. Thus allowing the newly hatched fish to swim free. HCE binds tightly to the egg envelope while it exerts the choriolytic swelling action. The polypeptide is High choriolytic enzyme 1 (hcea) (Oryzias latipes (Japanese rice fish)).